The primary structure comprises 622 residues: Low affinity potassium transport system protein Kup (622 aa).

Transmembrane regions (helical) follow at residues 9–29, 49–69, 101–121, 137–157, 163–183, 213–233, 247–267, 276–296, 337–357, 363–383, 395–415, and 419–439; these read LPAL…TSPL, VFGF…IKYI, VLVI…VITP, PQLD…LFVI, GMVG…LAVL, VSFI…ALYA, WFSV…ALLL, PFFL…ATLA, IYIP…IVSF, LAAA…ILSA, LFVG…FSAN, and IVSG…VMTT.

Belongs to the HAK/KUP transporter (TC 2.A.72) family.

Its subcellular location is the cell inner membrane. The catalysed reaction is K(+)(in) + H(+)(in) = K(+)(out) + H(+)(out). Its function is as follows. Responsible for the low-affinity transport of potassium into the cell. Likely operates as a K(+):H(+) symporter. This chain is Low affinity potassium transport system protein Kup, found in Klebsiella pneumoniae subsp. pneumoniae (strain ATCC 700721 / MGH 78578).